The sequence spans 209 residues: CASP-like protein 2A2 (209 aa).

The Cytoplasmic portion of the chain corresponds to 1–37 (MSKTAGVGRLGGARAADAAQQQQLAAGDAAVARAARP). A helical membrane pass occupies residues 38 to 58 (IETLLRAAPLVLCVAAMTLML). At 59-79 (RDQQSNEYGTVAYSDLGGFKY) the chain is on the extracellular side. A helical membrane pass occupies residues 80–100 (LVYANGLCAAYSLASAFYTAV). The Cytoplasmic portion of the chain corresponds to 101–109 (PRPATVSRS). The helical transmembrane segment at 110–130 (WVVFLLDQVFTYLILAAGAAA) threads the bilayer. Residues 131–161 (AELLYLAYNGDKEVTWSEACGVFGSFCRQAR) are Extracellular-facing. Residues 162 to 182 (ISVAITFGAVLCFILLSLLSS) traverse the membrane as a helical segment. The Cytoplasmic portion of the chain corresponds to 183–209 (YRLFSAYEAPPPSALGSKGVEIAAYPR).

This sequence belongs to the Casparian strip membrane proteins (CASP) family. In terms of assembly, homodimer and heterodimers.

It is found in the cell membrane. The chain is CASP-like protein 2A2 from Zea mays (Maize).